The chain runs to 94 residues: Large ribosomal subunit protein uL23 (94 aa).

This sequence belongs to the universal ribosomal protein uL23 family. As to quaternary structure, part of the 50S ribosomal subunit. Contacts protein L29, and trigger factor when it is bound to the ribosome.

Its function is as follows. One of the early assembly proteins it binds 23S rRNA. One of the proteins that surrounds the polypeptide exit tunnel on the outside of the ribosome. Forms the main docking site for trigger factor binding to the ribosome. The sequence is that of Large ribosomal subunit protein uL23 from Roseiflexus sp. (strain RS-1).